Here is a 173-residue protein sequence, read N- to C-terminus: Co-chaperone protein HscB homolog (173 aa).

One can recognise a J domain in the interval 5 to 77 (CHFALFELQP…AQRARYLLTI (73 aa)).

Belongs to the HscB family. Interacts with HscA and stimulates its ATPase activity.

Its function is as follows. Co-chaperone involved in the maturation of iron-sulfur cluster-containing proteins. Seems to help targeting proteins to be folded toward HscA. The protein is Co-chaperone protein HscB homolog of Pseudomonas fluorescens (strain Pf0-1).